Consider the following 250-residue polypeptide: Probable transcriptional regulatory protein Cag_0165 (250 aa).

It belongs to the TACO1 family.

The protein resides in the cytoplasm. The chain is Probable transcriptional regulatory protein Cag_0165 from Chlorobium chlorochromatii (strain CaD3).